The primary structure comprises 132 residues: MAAQKQAARKTRRRDRKSIPVGQAHIKSTFNNTIISITDPSGAVVSWASGGDVGFKGSRKSTPYAAGMAAESAARKAMEHGVKKVDVFVKGPGSGRETAIRSLQSAGLEVGSITDVTPQAFNGVRPPKRRRV.

It belongs to the universal ribosomal protein uS11 family. Part of the 30S ribosomal subunit. Interacts with proteins S7 and S18. Binds to IF-3.

In terms of biological role, located on the platform of the 30S subunit, it bridges several disparate RNA helices of the 16S rRNA. Forms part of the Shine-Dalgarno cleft in the 70S ribosome. This chain is Small ribosomal subunit protein uS11, found in Bifidobacterium animalis subsp. lactis (strain AD011).